We begin with the raw amino-acid sequence, 167 residues long: Early nodulin-like protein 16 (167 aa).

A signal peptide spans 1 to 24 (MARVAVLVAGAVLAFLLAATNVTA). The region spanning 25 to 126 (KRWTVGDNKF…GMKLAVLVEK (102 aa)) is the Phytocyanin domain. Residues N40, N71, N86, and N99 are each glycosylated (N-linked (GlcNAc...) asparagine). An intrachain disulfide couples C78 to C114. The GPI-anchor amidated asparagine moiety is linked to residue N138. Positions 139–167 (SARRTFSVSGFAYQFLIPVAVFAAVGTRY) are cleaved as a propeptide — removed in mature form.

The protein belongs to the early nodulin-like (ENODL) family.

It is found in the cell membrane. May act as a carbohydrate transporter. The protein is Early nodulin-like protein 16 of Arabidopsis thaliana (Mouse-ear cress).